We begin with the raw amino-acid sequence, 368 residues long: MQFIDQAEIEVQGGKGGDGMVSFRREKYVPAGGPSGGNGGRGGSVIFEADANLQTLLDFRYARIFKAEDGKKGGSSNCTGANGKDVVVQVPCGTMVYDLDGECLLGDLVSPGQRLCVAAGGKGGLGNQHFLSNRNRAPEYALPGLEGEQRQLRLELKLLAEVGIIGLPNAGKSTLIAALSAARPKIADYPFTTLVPNLGVVRKPTGDGTVFADIPGLIEGAAAGIGLGHEFLRHIERTRLLLHVLDVTAGDPIANFRVIQQELDAYGRGITEKPQIIALNKIDALDGEMIGEIETELKRFSTAPCLHISAATRRGLDDLMQLVWQWLDEMAAADAEAQRLLELELQAQAAMNNPFNSDVPIDGVTYSS.

One can recognise an Obg domain in the interval 1-159; sequence MQFIDQAEIE…RQLRLELKLL (159 aa). Residues 160–328 form the OBG-type G domain; it reads AEVGIIGLPN…LMQLVWQWLD (169 aa). GTP contacts are provided by residues 166–173, 191–195, 213–216, 280–283, and 309–311; these read GLPNAGKS, FTTLV, DIPG, NKID, and SAA. Mg(2+) contacts are provided by serine 173 and threonine 193.

It belongs to the TRAFAC class OBG-HflX-like GTPase superfamily. OBG GTPase family. As to quaternary structure, monomer. The cofactor is Mg(2+).

Its subcellular location is the cytoplasm. Functionally, an essential GTPase which binds GTP, GDP and possibly (p)ppGpp with moderate affinity, with high nucleotide exchange rates and a fairly low GTP hydrolysis rate. Plays a role in control of the cell cycle, stress response, ribosome biogenesis and in those bacteria that undergo differentiation, in morphogenesis control. In Synechocystis sp. (strain ATCC 27184 / PCC 6803 / Kazusa), this protein is GTPase Obg.